The sequence spans 130 residues: Small ribosomal subunit protein uS9 (130 aa).

The protein belongs to the universal ribosomal protein uS9 family.

This Salmonella paratyphi A (strain AKU_12601) protein is Small ribosomal subunit protein uS9.